Here is a 688-residue protein sequence, read N- to C-terminus: Glycine--tRNA ligase beta subunit (688 aa).

It belongs to the class-II aminoacyl-tRNA synthetase family. In terms of assembly, tetramer of two alpha and two beta subunits.

The protein resides in the cytoplasm. The catalysed reaction is tRNA(Gly) + glycine + ATP = glycyl-tRNA(Gly) + AMP + diphosphate. The sequence is that of Glycine--tRNA ligase beta subunit from Geotalea uraniireducens (strain Rf4) (Geobacter uraniireducens).